Reading from the N-terminus, the 156-residue chain is Ribonuclease pancreatic (156 aa).

Residues 1–28 (MALEKSLVLLPLLVLILLVLGWVQPSLG) form the signal peptide. Residues 33 to 43 (AKKFQRQHVDS) show a composition bias toward basic and acidic residues. Positions 33–53 (AKKFQRQHVDSDSSPSSSSTY) are disordered. Substrate is bound by residues Lys-35 and Arg-38. The Proton acceptor role is filled by His-40. 4 disulfides stabilise this stretch: Cys-54-Cys-112, Cys-68-Cys-123, Cys-86-Cys-138, and Cys-93-Cys-100. An N-linked (GlcNAc...) asparagine glycan is attached at Asn-62. Substrate-binding positions include 69 to 73 (KPVNT) and Lys-94. The N-linked (GlcNAc...) asparagine glycan is linked to Asn-104. Arg-113 is a substrate binding site. Asn-116 is a glycosylation site (N-linked (GlcNAc...) asparagine). Residue His-147 is the Proton donor of the active site.

This sequence belongs to the pancreatic ribonuclease family. Monomer. Interacts with and forms tight 1:1 complexes with RNH1. Dimerization of two such complexes may occur. Interaction with RNH1 inhibits this protein. As to expression, pancreas and other tissues and body fluids (indicating it may have other physiological functions besides its role in digestion).

The protein localises to the secreted. The enzyme catalyses an [RNA] containing cytidine + H2O = an [RNA]-3'-cytidine-3'-phosphate + a 5'-hydroxy-ribonucleotide-3'-[RNA].. It carries out the reaction an [RNA] containing uridine + H2O = an [RNA]-3'-uridine-3'-phosphate + a 5'-hydroxy-ribonucleotide-3'-[RNA].. Functionally, endonuclease that catalyzes the cleavage of RNA on the 3' side of pyrimidine nucleotides. Acts on single-stranded and double-stranded RNA. The sequence is that of Ribonuclease pancreatic (RNASE1) from Pan troglodytes (Chimpanzee).